The primary structure comprises 103 residues: Protamine-2 (103 aa).

Positions 1-103 (MVRYRTRSLS…RTRRRRCRRY (103 aa)) are disordered. 2 positions are modified to phosphoserine: Ser8 and Ser10. The segment covering 8–17 (SLSERPHEVH) has biased composition (basic and acidic residues). Residues 18–29 (GQQVHGQDQGHN) are compositionally biased toward low complexity. Position 37 is a phosphoserine (Ser37). Positions 39 to 48 (EHVEVYERTH) are enriched in basic and acidic residues. Residues 49–103 (QGHSHHRRRRCSQRRLHRIHRRRHRSCRRRRRRSCRHRRRHRRGCRTRRRRCRRY) show a composition bias toward basic residues.

The protein belongs to the protamine P2 family. Interacts with TDRP. Post-translationally, proteolytic processing into mature chains is required for histone eviction during spermatogenesis. Transition proteins (TNP1 and TNP2) are required for processing. Testis.

It is found in the nucleus. Its subcellular location is the chromosome. Protamines substitute for histones in the chromatin of sperm during the haploid phase of spermatogenesis. They compact sperm DNA into a highly condensed, stable and inactive complex. The polypeptide is Protamine-2 (PRM2) (Erythrocebus patas (Red guenon)).